Reading from the N-terminus, the 509-residue chain is Ribonuclease Y (509 aa).

The helical transmembrane segment at 1-21 (MIILVAVVTAVISFGLGYVVA) threads the bilayer. The region spanning 199 to 259 (TVSTVSLPSD…IRREIARLTL (61 aa)) is the KH domain. Positions 325–418 (VLDHSIEVAQ…VAAADALSAA (94 aa)) constitute an HD domain.

Belongs to the RNase Y family.

Its subcellular location is the cell membrane. In terms of biological role, endoribonuclease that initiates mRNA decay. This Pseudothermotoga lettingae (strain ATCC BAA-301 / DSM 14385 / NBRC 107922 / TMO) (Thermotoga lettingae) protein is Ribonuclease Y.